A 376-amino-acid chain; its full sequence is Mitogen-activated protein kinase 4 (376 aa).

In terms of domain architecture, Protein kinase spans valine 43–leucine 329. ATP contacts are provided by residues isoleucine 49–valine 57 and lysine 72. Aspartate 169 acts as the Proton acceptor in catalysis. Threonine 201 bears the Phosphothreonine mark. Residues threonine 201 to tyrosine 203 carry the TXY motif. Position 203 is a phosphotyrosine (tyrosine 203).

Belongs to the protein kinase superfamily. CMGC Ser/Thr protein kinase family. MAP kinase subfamily. As to quaternary structure, interacts with MEKK1, MKK1, MKK2 and MKK6. May form a ternary complex composed of MEKK1 and MKK1/MKK2 and MPK4. Interacts with MKS1 and AP2C1. May form a ternary or larger complex with MKS1 and WRKY25 and/or WRKY33. Interacts with MAP65-1. No interactions with RACK1A, RACK1B or RACK1C. Interacts directly with ASR3 and mediates its phosphorylation. Binds to MEKK2. Interacts with PAT1. Binds to HT1. Dually phosphorylated on Thr-201 and Tyr-203, which activates the enzyme. Autophosphorylated on serine and tyrosine residues. Dephosphorylated by DSPTP1. Phosphorylated by MKK6 in vitro. In terms of tissue distribution, ubiquitous. Expressed in the veins and stomatal guard cells of leaf plates, petioles, stem, roots and flowers.

It is found in the cytoplasm. The protein resides in the nucleus. Its subcellular location is the cytoskeleton. The enzyme catalyses L-seryl-[protein] + ATP = O-phospho-L-seryl-[protein] + ADP + H(+). The catalysed reaction is L-threonyl-[protein] + ATP = O-phospho-L-threonyl-[protein] + ADP + H(+). Activated by threonine and tyrosine phosphorylation. Activated by the MAP kinase kinases MKK1 and MKK2. Activated in response to touch, wounding, low temperature, low humidity, salt stress and the bacterial elicitors flagellin and harpin. Activated upon Pseudomonas syringae pv. tomato DC3000 infection. Repressed by the protein phosphatase 2C AP2C1. Repressed by DSPTP1-mediated dephosphorylation. Activated by the MAP kinase kinase MKK6 in vitro. Functionally, the ANPs-MKK6-MPK4 module is involved in the regulation of plant cytokinesis during meiosis and mitosis. Essential to promote the progression of cytokinesis and for cellularization (formation of the cell plate) during male-specific meiosis. Involved in cortical microtubules organization and stabilization by regulating the phosphorylation state of microtubule-associated proteins such as MAP65-1. Involved in root hair development process. Negative regulator of systemic acquired resistance (SAR) and salicylic acid- (SA) mediated defense response. Required for jasmonic acid- (JA) mediated defense gene expression. May regulate activity of transcription factor controlling pathogenesis-related (PR) gene expression. Seems to act independently of the SAR regulatory protein NPR1 (Nonexpresser of PR1). Phosphorylates MKS1 and transcription factors WRKY25 and WRKY33. The MEKK1, MKK1/MKK2 and MPK4 function in a signaling pathway that modulates the expression of genes responding to biotic and abiotic stresses and also plays an important role in pathogen defense by negatively regulating innate immunity. Phosphorylates MEKK2 upon treatment with flg22. Involved in stomatal movement regulation by repressing HT1 and HT1-mediated GHR1 phosphorylation. This is Mitogen-activated protein kinase 4 from Arabidopsis thaliana (Mouse-ear cress).